The following is a 332-amino-acid chain: Ornithine carbamoyltransferase 1, catabolic (332 aa).

Residues 56–59, Q83, R107, and 134–137 contribute to the carbamoyl phosphate site; these read STRT and HPTQ. L-ornithine contacts are provided by residues N167, D231, and 235–236; that span reads SM. Residues 273 to 274 and R318 each bind carbamoyl phosphate; that span reads CL.

The protein belongs to the aspartate/ornithine carbamoyltransferase superfamily. OTCase family.

It is found in the cytoplasm. It catalyses the reaction carbamoyl phosphate + L-ornithine = L-citrulline + phosphate + H(+). Its pathway is amino-acid degradation; L-arginine degradation via ADI pathway; carbamoyl phosphate from L-arginine: step 2/2. Its function is as follows. Reversibly catalyzes the transfer of the carbamoyl group from carbamoyl phosphate (CP) to the N(epsilon) atom of ornithine (ORN) to produce L-citrulline. The chain is Ornithine carbamoyltransferase 1, catabolic (arcB1) from Staphylococcus epidermidis (strain ATCC 12228 / FDA PCI 1200).